A 411-amino-acid chain; its full sequence is LL-diaminopimelate aminotransferase (411 aa).

The substrate site is built by tyrosine 15 and glycine 42. Pyridoxal 5'-phosphate contacts are provided by residues tyrosine 72, 108-109 (SK), tyrosine 132, asparagine 187, tyrosine 218, and 246-248 (SFS). Substrate contacts are provided by lysine 109, tyrosine 132, and asparagine 187. Lysine 249 carries the post-translational modification N6-(pyridoxal phosphate)lysine. Pyridoxal 5'-phosphate is bound by residues arginine 257 and asparagine 292. Residues asparagine 292 and arginine 388 each coordinate substrate.

It belongs to the class-I pyridoxal-phosphate-dependent aminotransferase family. LL-diaminopimelate aminotransferase subfamily. In terms of assembly, homodimer. It depends on pyridoxal 5'-phosphate as a cofactor.

The enzyme catalyses (2S,6S)-2,6-diaminopimelate + 2-oxoglutarate = (S)-2,3,4,5-tetrahydrodipicolinate + L-glutamate + H2O + H(+). It participates in amino-acid biosynthesis; L-lysine biosynthesis via DAP pathway; LL-2,6-diaminopimelate from (S)-tetrahydrodipicolinate (aminotransferase route): step 1/1. Functionally, involved in the synthesis of meso-diaminopimelate (m-DAP or DL-DAP), required for both lysine and peptidoglycan biosynthesis. Catalyzes the direct conversion of tetrahydrodipicolinate to LL-diaminopimelate. This chain is LL-diaminopimelate aminotransferase, found in Synechococcus sp. (strain JA-3-3Ab) (Cyanobacteria bacterium Yellowstone A-Prime).